Reading from the N-terminus, the 366-residue chain is Carbamoyl phosphate synthase small chain (366 aa).

The tract at residues 1 to 171 (MLEKRYLVLE…KTPYVSTGSD (171 aa)) is CPSase. Positions 47, 221, and 223 each coordinate L-glutamine. Positions 173–360 (SVVLLDFGKK…IAMMKDFKEK (188 aa)) constitute a Glutamine amidotransferase type-1 domain. Catalysis depends on Cys-248, which acts as the Nucleophile. L-glutamine contacts are provided by Leu-249, Gln-252, Asn-290, Gly-292, and Tyr-293. Catalysis depends on residues His-333 and Glu-335.

This sequence belongs to the CarA family. Composed of two chains; the small (or glutamine) chain promotes the hydrolysis of glutamine to ammonia, which is used by the large (or ammonia) chain to synthesize carbamoyl phosphate. Tetramer of heterodimers (alpha,beta)4.

The enzyme catalyses hydrogencarbonate + L-glutamine + 2 ATP + H2O = carbamoyl phosphate + L-glutamate + 2 ADP + phosphate + 2 H(+). It carries out the reaction L-glutamine + H2O = L-glutamate + NH4(+). It participates in amino-acid biosynthesis; L-arginine biosynthesis; carbamoyl phosphate from bicarbonate: step 1/1. Its pathway is pyrimidine metabolism; UMP biosynthesis via de novo pathway; (S)-dihydroorotate from bicarbonate: step 1/3. Its function is as follows. Small subunit of the glutamine-dependent carbamoyl phosphate synthetase (CPSase). CPSase catalyzes the formation of carbamoyl phosphate from the ammonia moiety of glutamine, carbonate, and phosphate donated by ATP, constituting the first step of 2 biosynthetic pathways, one leading to arginine and/or urea and the other to pyrimidine nucleotides. The small subunit (glutamine amidotransferase) binds and cleaves glutamine to supply the large subunit with the substrate ammonia. This chain is Carbamoyl phosphate synthase small chain, found in Staphylococcus epidermidis (strain ATCC 12228 / FDA PCI 1200).